The primary structure comprises 367 residues: Methylthioribose-1-phosphate isomerase (367 aa).

Residues 54–56 (RGA), arginine 91, and glutamine 201 each bind substrate. Catalysis depends on aspartate 242, which acts as the Proton donor. Residue 252–253 (NK) coordinates substrate.

Belongs to the eIF-2B alpha/beta/delta subunits family. MtnA subfamily.

The enzyme catalyses 5-(methylsulfanyl)-alpha-D-ribose 1-phosphate = 5-(methylsulfanyl)-D-ribulose 1-phosphate. It functions in the pathway amino-acid biosynthesis; L-methionine biosynthesis via salvage pathway; L-methionine from S-methyl-5-thio-alpha-D-ribose 1-phosphate: step 1/6. Its function is as follows. Catalyzes the interconversion of methylthioribose-1-phosphate (MTR-1-P) into methylthioribulose-1-phosphate (MTRu-1-P). The chain is Methylthioribose-1-phosphate isomerase from Acidiphilium cryptum (strain JF-5).